We begin with the raw amino-acid sequence, 70 residues long: U2-agatoxin-Ao1l (70 aa).

Positions 1 to 20 (MRAIISLLLISAMVFSIIEA) are cleaved as a signal peptide. A propeptide spanning residues 21 to 34 (VPEEEGLQLSEDER) is cleaved from the precursor. Cystine bridges form between C37–C53, C44–C58, and C52–C68. A Leucine amide modification is found at L69.

Belongs to the neurotoxin 01 (U2-agtx) family. Expressed by the venom gland.

It is found in the secreted. Its function is as follows. Insect active toxin causing rapid but reversible paralysis in crickets. No activity shown in mammals. Does not show effect on mammalian voltage-gated calcium channels. This is U2-agatoxin-Ao1l from Agelena orientalis (Funnel-web spider).